The sequence spans 31 residues: Conotoxin pc6d (31 aa).

Intrachain disulfides connect cysteine 2-cysteine 20, cysteine 9-cysteine 25, and cysteine 19-cysteine 29.

Belongs to the conotoxin O1 superfamily. In terms of tissue distribution, expressed by the venom duct.

The protein resides in the secreted. The sequence is that of Conotoxin pc6d from Conus pictus (Cone snail).